The sequence spans 368 residues: Serine/threonine-protein kinase CAK1 (368 aa).

The Protein kinase domain occupies 1-368 (MKLDSIDITH…QRILQELEKP (368 aa)). Catalysis depends on aspartate 156, which acts as the Proton acceptor.

The protein belongs to the protein kinase superfamily. CMGC Ser/Thr protein kinase family. CDC2/CDKX subfamily.

It catalyses the reaction L-seryl-[protein] + ATP = O-phospho-L-seryl-[protein] + ADP + H(+). It carries out the reaction L-threonyl-[protein] + ATP = O-phospho-L-threonyl-[protein] + ADP + H(+). This is Serine/threonine-protein kinase CAK1 (CAK1) from Saccharomyces cerevisiae (strain ATCC 204508 / S288c) (Baker's yeast).